The chain runs to 620 residues: 1-deoxy-D-xylulose-5-phosphate synthase (620 aa).

Thiamine diphosphate is bound by residues His-80 and 121-123 (GHS). A Mg(2+)-binding site is contributed by Asp-152. Residues 153–154 (GA), Asn-181, Tyr-288, and Glu-370 contribute to the thiamine diphosphate site. Residue Asn-181 participates in Mg(2+) binding.

This sequence belongs to the transketolase family. DXPS subfamily. In terms of assembly, homodimer. Mg(2+) is required as a cofactor. Thiamine diphosphate serves as cofactor.

The enzyme catalyses D-glyceraldehyde 3-phosphate + pyruvate + H(+) = 1-deoxy-D-xylulose 5-phosphate + CO2. It functions in the pathway metabolic intermediate biosynthesis; 1-deoxy-D-xylulose 5-phosphate biosynthesis; 1-deoxy-D-xylulose 5-phosphate from D-glyceraldehyde 3-phosphate and pyruvate: step 1/1. In terms of biological role, catalyzes the acyloin condensation reaction between C atoms 2 and 3 of pyruvate and glyceraldehyde 3-phosphate to yield 1-deoxy-D-xylulose-5-phosphate (DXP). The polypeptide is 1-deoxy-D-xylulose-5-phosphate synthase (Escherichia coli (strain 55989 / EAEC)).